Consider the following 364-residue polypeptide: Aminomethyltransferase (364 aa).

It belongs to the GcvT family. In terms of assembly, the glycine cleavage system is composed of four proteins: P, T, L and H.

It carries out the reaction N(6)-[(R)-S(8)-aminomethyldihydrolipoyl]-L-lysyl-[protein] + (6S)-5,6,7,8-tetrahydrofolate = N(6)-[(R)-dihydrolipoyl]-L-lysyl-[protein] + (6R)-5,10-methylene-5,6,7,8-tetrahydrofolate + NH4(+). Its function is as follows. The glycine cleavage system catalyzes the degradation of glycine. The chain is Aminomethyltransferase from Staphylococcus carnosus (strain TM300).